Consider the following 898-residue polypeptide: Netrin receptor UNC5A (898 aa).

Residues 1 to 25 (MAVRPGLWPVLLGIVLAAWLRGSGA) form the signal peptide. Residues 26 to 361 (QQSATVANPV…TASCPEDVAL (336 aa)) lie on the Extracellular side of the membrane. Positions 44–141 (PHFLVEPEDV…SGTTKSQKAY (98 aa)) constitute an Ig-like domain. 3 disulfides stabilise this stretch: cysteine 65–cysteine 126, cysteine 77–cysteine 124, and cysteine 170–cysteine 221. Asparagine 107 and asparagine 218 each carry an N-linked (GlcNAc...) asparagine glycan. The 84-residue stretch at 155-238 (PLAKEVSLEQ…RRRSTSAAVI (84 aa)) folds into the Ig-like C2-type domain. TSP type-1 domains are found at residues 242–296 (NGGW…TLCP) and 298–350 (DGSW…DLCL). 3 C-linked (Man) tryptophan glycosylation sites follow: tryptophan 245, tryptophan 248, and tryptophan 251. Disulfide bonds link cysteine 254-cysteine 291, cysteine 258-cysteine 295, and cysteine 269-cysteine 281. C-linked (Man) tryptophan glycosylation is found at tryptophan 301 and tryptophan 304. 3 cysteine pairs are disulfide-bonded: cysteine 310/cysteine 344, cysteine 314/cysteine 349, and cysteine 322/cysteine 334. Asparagine 343 carries N-linked (GlcNAc...) asparagine glycosylation. Residues 362-382 (YIGLVAVAVCLFLLLLALGLI) form a helical membrane-spanning segment. At 383 to 898 (YCRKKEGLDS…GLFTVSEAEC (516 aa)) the chain is on the cytoplasmic side. The ZU5 domain occupies 497-640 (NMAYGTFNFL…LGRFALVGEA (144 aa)). An interaction with DCC region spans residues 661 to 679 (SLEYNIRVYCLHDTHDALK). Residues 817 to 897 (QKIIASLDPP…AGLFTVSEAE (81 aa)) form the Death domain.

This sequence belongs to the unc-5 family. Homodimer and homooligomer. Interacts with the cytoplasmic part of DCC. Interacts with MAGED1. Interacts with PRKCABP, possibly mediating some interaction with PKC. Interacts (via extracellular domain) with FLRT2 (via extracellular domain). Interacts (via extracellular domain) with FLRT3 (via extracellular domain). In terms of processing, phosphorylated on cytoplasmic tyrosine residues. Phosphorylated by PKC in vitro. Post-translationally, proteolytically cleaved by caspases during apoptosis. The cleavage does not take place when the receptor is associated with netrin ligand. Its cleavage by caspases is required to induce apoptosis. The two extracellular TSRs of UNC5A contain WxxWxxWxxC motifs that can be C-mannosylated on all tryptophans. DPY19L1 preferentially mannosylates the first two tryptophans and DPY19L3 prefers the third. C-mannosylation by DPY19L1 is required for transport of UNC5A from the endoplasmic reticulum to the cell surface. In terms of tissue distribution, mainly expressed in regions of differentiating neurons. Expressed at early stages of neural tube development in the ventral spinal cord. In developing hindbrain, it colocalizes with a number of cranial motor neuron subpopulations from embryonic E11 to E14, while DCC is expressed by motor neurons at E12. Also expressed in non-neural structures, such as the basal plane of the hindbrain and midbrain, in the developing hypothalamus, thalamus and in the pallidum.

It localises to the cell membrane. Its subcellular location is the membrane raft. The protein resides in the cell projection. It is found in the neuron projection. Functionally, receptor for netrin required for axon guidance. Functions in the netrin signaling pathway and promotes neurite outgrowth in response to NTN1. Mediates axon repulsion of neuronal growth cones in the developing nervous system in response to netrin. Axon repulsion in growth cones may be mediated by its association with DCC that may trigger signaling for repulsion. It also acts as a dependence receptor required for apoptosis induction when not associated with netrin ligand. This is Netrin receptor UNC5A (Unc5a) from Rattus norvegicus (Rat).